The following is a 305-amino-acid chain: Oxygen-dependent coproporphyrinogen-III oxidase (305 aa).

Ser92 lines the substrate pocket. 2 residues coordinate a divalent metal cation: His96 and His106. His106 serves as the catalytic Proton donor. Substrate is bound at residue 108–110 (NVR). Residues His145 and His175 each contribute to the a divalent metal cation site. Residues 239 to 274 (YVEFNLLFDRGTLFGLQSGGRAESILISLPPLVRWE) are important for dimerization. A substrate-binding site is contributed by 257 to 259 (GGR).

This sequence belongs to the aerobic coproporphyrinogen-III oxidase family. In terms of assembly, homodimer. A divalent metal cation serves as cofactor.

The protein resides in the cytoplasm. It catalyses the reaction coproporphyrinogen III + O2 + 2 H(+) = protoporphyrinogen IX + 2 CO2 + 2 H2O. It participates in porphyrin-containing compound metabolism; protoporphyrin-IX biosynthesis; protoporphyrinogen-IX from coproporphyrinogen-III (O2 route): step 1/1. Involved in the heme biosynthesis. Catalyzes the aerobic oxidative decarboxylation of propionate groups of rings A and B of coproporphyrinogen-III to yield the vinyl groups in protoporphyrinogen-IX. The sequence is that of Oxygen-dependent coproporphyrinogen-III oxidase from Xylella fastidiosa (strain M12).